Consider the following 163-residue polypeptide: Phosphopantetheine adenylyltransferase (163 aa).

Substrate is bound at residue serine 9. Residues 9–10 (SF) and histidine 17 contribute to the ATP site. Residues lysine 41, leucine 73, and lysine 87 each contribute to the substrate site. Residues 88–90 (GLR), glutamate 98, and 124–130 (YTYVSST) contribute to the ATP site.

This sequence belongs to the bacterial CoaD family. Homohexamer. Requires Mg(2+) as cofactor.

The protein localises to the cytoplasm. It catalyses the reaction (R)-4'-phosphopantetheine + ATP + H(+) = 3'-dephospho-CoA + diphosphate. The protein operates within cofactor biosynthesis; coenzyme A biosynthesis; CoA from (R)-pantothenate: step 4/5. Reversibly transfers an adenylyl group from ATP to 4'-phosphopantetheine, yielding dephospho-CoA (dPCoA) and pyrophosphate. This is Phosphopantetheine adenylyltransferase from Fusobacterium nucleatum subsp. nucleatum (strain ATCC 25586 / DSM 15643 / BCRC 10681 / CIP 101130 / JCM 8532 / KCTC 2640 / LMG 13131 / VPI 4355).